The following is a 161-amino-acid chain: MSEVFTHINEEGRARMVDVSEKDNTIRQAIASGKISMEKDTLERIKEGTISKGDVLAVAQVGGIMGAKSTSQIIPMCHNILISNCDINFKFDFENSEIEIVAMTKTVGKTGIEMEALTAVSAAALTIYDMCKAIDREMVISDIMLVKKSGGKSGDFERVGL.

Substrate-binding positions include 76–78 and 114–115; these read MCH and ME. Residue aspartate 129 is part of the active site.

This sequence belongs to the MoaC family. As to quaternary structure, homohexamer; trimer of dimers.

It catalyses the reaction (8S)-3',8-cyclo-7,8-dihydroguanosine 5'-triphosphate = cyclic pyranopterin phosphate + diphosphate. It functions in the pathway cofactor biosynthesis; molybdopterin biosynthesis. Catalyzes the conversion of (8S)-3',8-cyclo-7,8-dihydroguanosine 5'-triphosphate to cyclic pyranopterin monophosphate (cPMP). The sequence is that of Cyclic pyranopterin monophosphate synthase from Clostridium acetobutylicum (strain ATCC 824 / DSM 792 / JCM 1419 / IAM 19013 / LMG 5710 / NBRC 13948 / NRRL B-527 / VKM B-1787 / 2291 / W).